A 158-amino-acid chain; its full sequence is Transcriptional repressor NrdR (158 aa).

The segment at 3–34 is a zinc-finger region; sequence CPYCGYPDSRVIDSRPTDDNTAIRRRRECLKC. Residues 49–139 enclose the ATP-cone domain; sequence ILVIKKDNRR…VYRQFKDINT (91 aa).

It belongs to the NrdR family. Zn(2+) serves as cofactor.

Functionally, negatively regulates transcription of bacterial ribonucleotide reductase nrd genes and operons by binding to NrdR-boxes. The sequence is that of Transcriptional repressor NrdR from Caldanaerobacter subterraneus subsp. tengcongensis (strain DSM 15242 / JCM 11007 / NBRC 100824 / MB4) (Thermoanaerobacter tengcongensis).